Reading from the N-terminus, the 199-residue chain is Holliday junction branch migration complex subunit RuvA (199 aa).

The interval 1-63 is domain I; that stretch reads MIASVRGEVL…EDSMTLYGFT (63 aa). A domain II region spans residues 64–142; that stretch reads DAETRDLFLT…AAGAAGAPAG (79 aa). The interval 143–153 is flexible linker; that stretch reads AARNGHAVRGP. The domain III stretch occupies residues 153 to 199; the sequence is PVVEALVGLGFAAKQAEEATDKVLAAEPEAGTSGALRAALSLLGKSR.

The protein belongs to the RuvA family. As to quaternary structure, homotetramer. Forms an RuvA(8)-RuvB(12)-Holliday junction (HJ) complex. HJ DNA is sandwiched between 2 RuvA tetramers; dsDNA enters through RuvA and exits via RuvB. An RuvB hexamer assembles on each DNA strand where it exits the tetramer. Each RuvB hexamer is contacted by two RuvA subunits (via domain III) on 2 adjacent RuvB subunits; this complex drives branch migration. In the full resolvosome a probable DNA-RuvA(4)-RuvB(12)-RuvC(2) complex forms which resolves the HJ.

The protein localises to the cytoplasm. Its function is as follows. The RuvA-RuvB-RuvC complex processes Holliday junction (HJ) DNA during genetic recombination and DNA repair, while the RuvA-RuvB complex plays an important role in the rescue of blocked DNA replication forks via replication fork reversal (RFR). RuvA specifically binds to HJ cruciform DNA, conferring on it an open structure. The RuvB hexamer acts as an ATP-dependent pump, pulling dsDNA into and through the RuvAB complex. HJ branch migration allows RuvC to scan DNA until it finds its consensus sequence, where it cleaves and resolves the cruciform DNA. The polypeptide is Holliday junction branch migration complex subunit RuvA (Mycobacterium avium (strain 104)).